Consider the following 425-residue polypeptide: MFTFSPSFMFDFELTRILGSASSGGCDVGEFKSALNTIKKNDPESWYAAWKQQAERAQKIADEAAKAGYRVLARNAYLRASNYFRATSYMFNNDDARVIPFTDKSIACFKRATELMDGEVLSVDIPYEDGITLPGYLFLPPQYARVPGKIPVVMYAAGADSTKEELYFLYGGTGPQLGYAILCLEGPGQGLLLKKNKIPLRPDFEVVAAKVLDFLDDLSRSQPALELDLGRIAMAGAATGGYFALRAATDPRIKACVSIDPFFSLWELSLTRVPQAFFKLWDSGWVPDGTFDAFTDRHARGNFQAGWEINLGKSSMGVEKATGMFRRFKQFTLEPEDGTKILDKVTCPVFITGPGSGQEMYASADDSTFKIQRLLTKVPDSKKEIWVPNDVADGGLTAKIGAWALLAQKTFEFLDKHFEVKRKEL.

D366 is an active-site residue.

It belongs to the AB hydrolase superfamily. FUS2 hydrolase family. In terms of assembly, homodimer.

It participates in mycotoxin biosynthesis. Its function is as follows. Alpha/beta hydrolase; part of the gene cluster that mediates the biosynthesis of xenoacremones such as xenoacremone A, a compound that shows inhibitory activity toward the PI3K/AKT signaling pathway and which has the ability to induce apoptosis of A549 lung cancer cells. Within the pathway, cooperation of the hybrid PKS-NRPS xenE and the trans-acting enoyl reductase xenG is responsible for the formation of the reduced tyrosine-nonaketide derivative. The alpha/beta hydrolase xenA then accelerates intramolecular nucleophilic attack to give a pyrrolidone derivative. Subsequently, three enzymes, xenF, xenD, and xenC, coordinately participate in the conversion to xenoacremone B. XenF catalyzes sigmatropic rearrangement to form an A-ring, which leads to an unusual intermediate with a hexane ring, which is required for the formation of the tricarbocyclic product. Epoxidation catalyzed by xenD and the formation of the paracyclophane ether catalyzed by xenC initiate a spontaneous intramolecular Diels-Alder (IMDA) reaction to yield xenoacremone B. Spontaneous hydration of xenoacremone B leads to the formation of xenoacremone A, which undergoes subsequent methylation to afford xenoacremone C. This Xenoacremonium sinensis (Endophyte fungus) protein is Alpha/beta hydrolase xenA.